The following is a 689-amino-acid chain: Elongation factor G (689 aa).

The 275-residue stretch at 9–283 (AKFRNIGIMA…AIIEFMPSPL (275 aa)) folds into the tr-type G domain. Residues 18–25 (AHIDAGKT), 82–86 (DTPGH), and 136–139 (NKMD) contribute to the GTP site.

The protein belongs to the TRAFAC class translation factor GTPase superfamily. Classic translation factor GTPase family. EF-G/EF-2 subfamily.

The protein resides in the cytoplasm. Its function is as follows. Catalyzes the GTP-dependent ribosomal translocation step during translation elongation. During this step, the ribosome changes from the pre-translocational (PRE) to the post-translocational (POST) state as the newly formed A-site-bound peptidyl-tRNA and P-site-bound deacylated tRNA move to the P and E sites, respectively. Catalyzes the coordinated movement of the two tRNA molecules, the mRNA and conformational changes in the ribosome. This chain is Elongation factor G, found in Clostridium botulinum (strain ATCC 19397 / Type A).